The primary structure comprises 429 residues: Tryptophan synthase beta chain 2 (429 aa).

Residues 18–40 form a disordered region; the sequence is NINPDLPSPLPEPKNPEGGKNIE. An N6-(pyridoxal phosphate)lysine modification is found at Lys110.

It belongs to the TrpB family. As to quaternary structure, tetramer of two alpha and two beta chains. It depends on pyridoxal 5'-phosphate as a cofactor.

The enzyme catalyses (1S,2R)-1-C-(indol-3-yl)glycerol 3-phosphate + L-serine = D-glyceraldehyde 3-phosphate + L-tryptophan + H2O. The protein operates within amino-acid biosynthesis; L-tryptophan biosynthesis; L-tryptophan from chorismate: step 5/5. Functionally, the beta subunit is responsible for the synthesis of L-tryptophan from indole and L-serine. This Methanothermobacter thermautotrophicus (strain ATCC 29096 / DSM 1053 / JCM 10044 / NBRC 100330 / Delta H) (Methanobacterium thermoautotrophicum) protein is Tryptophan synthase beta chain 2 (trpB2).